The sequence spans 360 residues: Probable butyrate kinase (360 aa).

This sequence belongs to the acetokinase family.

The protein localises to the cytoplasm. It carries out the reaction butanoate + ATP = butanoyl phosphate + ADP. This is Probable butyrate kinase from Enterococcus faecalis (strain ATCC 700802 / V583).